Reading from the N-terminus, the 377-residue chain is Succinyl-diaminopimelate desuccinylase (377 aa).

His68 is a Zn(2+) binding site. Asp70 is an active-site residue. Asp101 contacts Zn(2+). The active-site Proton acceptor is Glu135. Positions 136, 164, and 350 each coordinate Zn(2+).

Belongs to the peptidase M20A family. DapE subfamily. As to quaternary structure, homodimer. It depends on Zn(2+) as a cofactor. Co(2+) serves as cofactor.

It catalyses the reaction N-succinyl-(2S,6S)-2,6-diaminopimelate + H2O = (2S,6S)-2,6-diaminopimelate + succinate. The protein operates within amino-acid biosynthesis; L-lysine biosynthesis via DAP pathway; LL-2,6-diaminopimelate from (S)-tetrahydrodipicolinate (succinylase route): step 3/3. In terms of biological role, catalyzes the hydrolysis of N-succinyl-L,L-diaminopimelic acid (SDAP), forming succinate and LL-2,6-diaminopimelate (DAP), an intermediate involved in the bacterial biosynthesis of lysine and meso-diaminopimelic acid, an essential component of bacterial cell walls. The chain is Succinyl-diaminopimelate desuccinylase from Vibrio cholerae serotype O1 (strain ATCC 39541 / Classical Ogawa 395 / O395).